We begin with the raw amino-acid sequence, 71 residues long: Probable ribosome maturation protein RlbA (71 aa).

Positions 12–69 constitute an S4 RNA-binding domain; that stretch reads ITLGQFLKLADVIQSGGMAKWFLSEHEVLVNDEPDNRRGRKLYVGDVVEIEGFGSFQV.

In terms of biological role, may assist in the assembly of the 50S subunit. This chain is Probable ribosome maturation protein RlbA, found in Bacillus subtilis (strain 168).